The chain runs to 120 residues: UPF0231 protein Spro_4007 (120 aa).

This sequence belongs to the UPF0231 family.

The polypeptide is UPF0231 protein Spro_4007 (Serratia proteamaculans (strain 568)).